The primary structure comprises 751 residues: Polyadenylate-binding protein, cytoplasmic and nuclear (751 aa).

Composition is skewed to polar residues over residues 1–26 (MSAE…NPAA) and 36–50 (ESAS…NQPH). The tract at residues 1–50 (MSAEVSTTPAADNTVNGTPEATNPAATSAPEVTAVESASPSATPSANQPH) is disordered. 4 consecutive RRM domains span residues 52-130 (ASLY…WSQR), 140-217 (GNVF…HHIS), 233-310 (TNVY…RAQK), and 336-458 (VNLY…LAQR). Disordered stretches follow at residues 371–413 (TVTA…KKTE) and 601–643 (GQGM…REEV). Over residues 379–413 (ESEKEKESNKENEKEGEEKTEEKPKESEEEAKKTE) the composition is skewed to basic and acidic residues. Gly residues predominate over residues 603-629 (GMRGPGYGQGRGGAPVQGGPRPQGGRG). The PABC domain occupies 646–723 (TGGLTAQTLN…ALSVYDEYMK (78 aa)). Residues 725-751 (KGEGEAPAEPAKPKEDAAETATEENKS) form a disordered region. A compositionally biased stretch (basic and acidic residues) spans 735–751 (AKPKEDAAETATEENKS).

This sequence belongs to the polyadenylate-binding protein type-1 family.

It is found in the cytoplasm. The protein localises to the nucleus. Functionally, binds the poly(A) tail of mRNA. Appears to be an important mediator of the multiple roles of the poly(A) tail in mRNA biogenesis, stability and translation. In the nucleus, involved in both mRNA cleavage and polyadenylation. Is also required for efficient mRNA export to the cytoplasm. Acts in concert with a poly(A)-specific nuclease (PAN) to affect poly(A) tail shortening, which may occur concomitantly with either nucleocytoplasmic mRNA transport or translational initiation. In the cytoplasm, stimulates translation initiation and regulates mRNA decay through translation termination-coupled poly(A) shortening, probably mediated by PAN. This is Polyadenylate-binding protein, cytoplasmic and nuclear (pab1) from Neosartorya fischeri (strain ATCC 1020 / DSM 3700 / CBS 544.65 / FGSC A1164 / JCM 1740 / NRRL 181 / WB 181) (Aspergillus fischerianus).